We begin with the raw amino-acid sequence, 376 residues long: Zinc finger CCCH domain-containing protein C337.12 (376 aa).

A coiled-coil region spans residues 2–25 (NEQQLLENIASLAGAINQYKNEKE). Positions 60–95 (SKSTAASPPYVIPSTSSNADDANKEPEKQSTSDYVS) are disordered. The span at 80–89 (DANKEPEKQS) shows a compositional bias: basic and acidic residues. A coiled-coil region spans residues 105 to 140 (KKNILEHDLQARKANLESYRAKLEKEYKTLAENKIQ). 4 C3H1-type zinc fingers span residues 202–228 (SPSA…FVHE), 229–256 (PTRK…HELD), 257–283 (PRRI…HIHY), and 284–312 (SENA…HILQ). The tract at residues 347–376 (SKTAGSINPEDSGSEIGSNSLESNLDFISV) is disordered. A compositionally biased stretch (polar residues) spans 349 to 369 (TAGSINPEDSGSEIGSNSLES).

It is found in the nucleus. In Schizosaccharomyces pombe (strain 972 / ATCC 24843) (Fission yeast), this protein is Zinc finger CCCH domain-containing protein C337.12.